The sequence spans 138 residues: uncharacterized protein (138 aa).

Residue 35–42 coordinates ATP; that stretch reads DFIGSFYN.

This is an uncharacterized protein from Acanthamoeba polyphaga mimivirus (APMV).